A 1048-amino-acid polypeptide reads, in one-letter code: MVLINDKKFACEKCIKGHRVSACTHTDRPLFEVKKKGRPSTQCRHCKEKRKSAGSSVHTKCQCGATDPKTLKDILASVNAAHAAANESGGASATANTSAEPEIETRKGQPGSKPTFPRGLKDVHEIAAAANALQGWGEDDQVVKAAERTVQALLNPCKCELGGPCTCCQIKTKPRRKHSGHEFENPASAGATPPGGGCCGSSVHSRDDVATRNSPTSINSSEAIHHPPQTAPMLHKTRLFSPYSTDLRRRDSSSSTGSKTPGWASPRAMRPPVSRIKPLTDMRRLMNAAVNQDGTLASEIPRSVVGLPTLPGIESFNTSANLENGEKSKDVDMPLAFPTSEDVVIGACMCGDDCSCPGCATHDHHNISPSNRTHDGSCGESCKGHNDCAHSIPIPSGVQSIAQLICIAASQVPPPPPNRTDSLNPHDTRILPPSVSLSEDVARTMGIVPLKPLECCGGKCGCPPGECACTKQCCGCCGECTCEKDEDTRMEEEGEYTESARDVTTSSCGGCKGKEKQSGFSDMMSPQIPQSVSPTSYHVPPLQPKPLNLPVSTIHHSTLSPSFNTPQPSPPAVSSPADSLSMAVHPSNGPNVRPVPMIQPRPILPKRASDTGLVMPQGSRPPSALGRSGSMTATKRSGTSTGVRRSNSDVRKVVGPSQPHHRPSIQSSSDRSFYIGSPSNQIAPGGVPMASAPSQMTAPLNSADSNSDLLAFIQQQWSADKTSNSNSDMNPSHPTMPVSLTAEPWAFPPQNETTDDSAPVPFDLDAFLMSIGVQPDGELRNDRPLSSQPPQSLMPNIPPTQPIAPLPPIPPSMSDVRPGYDMTFANFFLNSTPSGPSGPSAIPATNIPSRHTTPQASRPLTPPESSFTEPPRWKFPGDLGGEIPIWNGPEALEGFGVLGSPVSEKEEVTEESQNEKDIIDLSKPLDSAALTKIMKALEKQGGGQSSSQGAPSVANTDQQLQSLPALQTVPPVHPASVISPTRADPAHELDDMFSQFVTLDGTPIGSNNDGLGLNGGPGMMALPTNLSLGDELGFGGEMRWDQARMWSN.

The copper-fist DNA-binding region spans 1–40 (MVLINDKKFACEKCIKGHRVSACTHTDRPLFEVKKKGRPS). Positions 11, 14, 23, and 25 each coordinate Zn(2+). A compositionally biased stretch (low complexity) spans 85 to 99 (ANESGGASATANTSA). Disordered regions lie at residues 85–117 (ANES…PTFP) and 178–273 (HSGH…RPPV). Positions 211–222 (TRNSPTSINSSE) are enriched in polar residues. The short motif at 348–362 (CMCGDDCSCPGCATH) is the CRM-I element. Residues 455-482 (CCGGKCGCPPGECACTKQCCGCCGECTC) carry the CRM-II motif. Disordered regions lie at residues 506 to 702 (SSCG…PLNS) and 835 to 876 (GPSG…WKFP). Composition is skewed to polar residues over residues 527–536 (QIPQSVSPTS), 550–565 (PVST…SFNT), 629–645 (GSMT…GVRR), 664–682 (SIQS…SNQI), and 692–702 (APSQMTAPLNS). Low complexity predominate over residues 835–845 (GPSGPSAIPAT). Residues 846–868 (NIPSRHTTPQASRPLTPPESSFT) are compositionally biased toward polar residues.

The protein resides in the nucleus. The protein localises to the cytoplasm. It localises to the cell cortex. Transcription factor that regulates copper acquisition and homeostasis, and which plays a central role in fungal pathogenesis during neurologic infection. The transcriptional regulation exerted by CUF1 is intrinsically complex since it acts as a dual sensor of copper levels, responsible for expression of a set of copper-specific copper transporters, CTR1 and CTR4, at low copper concentrations, and 2 metallothioneins, CMT1 and CMT2, at high copper concentrations. Positively regulates the expression of the copper acquisition factor BIM1 under copper-limiting conditions. Also positively regulates the expression of super oxide dismutase SOD2 isoform 2 during oxidative stress and copper-limiting conditions. Negatively regulates the expression of super oxide dismutase SOD1 during copper-limiting conditions. Also regulates ATM1, an ABC transporter with functions in the iron-sulfur clusters (ISC) export machinery, during copper stress. Another target of CUF1 is the gene encoding the laccase LAC1. Binds promoters of target genes at Cu-responsive elements (CuREs) that contain a variable A/T rich 5' region followed by the core consensus sequence 5'-G(G/C)CTC(A/G)-3'. Negatively regulates capsule biosynthesis, probably via modulating iron acquisition through the high-affinity iron uptake pathway. The chain is Copper-dependent transcription factor 1 from Cryptococcus neoformans var. grubii serotype A (strain H99 / ATCC 208821 / CBS 10515 / FGSC 9487) (Filobasidiella neoformans var. grubii).